A 74-amino-acid chain; its full sequence is Ubiquitin-like protein FUBI (74 aa).

It belongs to the ubiquitin family.

In Pongo abelii (Sumatran orangutan), this protein is Ubiquitin-like protein FUBI (FAU).